The primary structure comprises 239 residues: Orotidine 5'-phosphate decarboxylase (239 aa).

Residues Asp10, Lys32, 59-68 (DLKLHDIPNT), Thr122, Arg184, Gln193, Gly213, and Arg214 each bind substrate. The active-site Proton donor is Lys61.

Belongs to the OMP decarboxylase family. Type 1 subfamily. As to quaternary structure, homodimer.

It catalyses the reaction orotidine 5'-phosphate + H(+) = UMP + CO2. Its pathway is pyrimidine metabolism; UMP biosynthesis via de novo pathway; UMP from orotate: step 2/2. In terms of biological role, catalyzes the decarboxylation of orotidine 5'-monophosphate (OMP) to uridine 5'-monophosphate (UMP). This chain is Orotidine 5'-phosphate decarboxylase, found in Geobacillus sp. (strain WCH70).